The following is a 619-amino-acid chain: Chaperone protein HscA homolog (619 aa).

This sequence belongs to the heat shock protein 70 family.

In terms of biological role, chaperone involved in the maturation of iron-sulfur cluster-containing proteins. Has a low intrinsic ATPase activity which is markedly stimulated by HscB. The polypeptide is Chaperone protein HscA homolog (Haemophilus influenzae (strain 86-028NP)).